Consider the following 369-residue polypeptide: Histidinol-phosphate aminotransferase 2 (369 aa).

Lysine 227 bears the N6-(pyridoxal phosphate)lysine mark.

The protein belongs to the class-II pyridoxal-phosphate-dependent aminotransferase family. Histidinol-phosphate aminotransferase subfamily. In terms of assembly, homodimer. Pyridoxal 5'-phosphate is required as a cofactor.

It catalyses the reaction L-histidinol phosphate + 2-oxoglutarate = 3-(imidazol-4-yl)-2-oxopropyl phosphate + L-glutamate. The protein operates within amino-acid biosynthesis; L-histidine biosynthesis; L-histidine from 5-phospho-alpha-D-ribose 1-diphosphate: step 7/9. The protein is Histidinol-phosphate aminotransferase 2 (hisC2) of Mesorhizobium japonicum (strain LMG 29417 / CECT 9101 / MAFF 303099) (Mesorhizobium loti (strain MAFF 303099)).